We begin with the raw amino-acid sequence, 595 residues long: uncharacterized protein (595 aa).

The segment at 112 to 180 is disordered; that stretch reads VRPPGYDPES…KDVFGRALPT (69 aa). 2 stretches are compositionally biased toward basic and acidic residues: residues 120 to 133 and 161 to 174; these read ESAKAAEYKDEKHK and RTQERKKPRPKDVF. The CCHC-type; degenerate zinc finger occupies 211–228; it reads VKCLRCGNFGHQSGDRDC. Disordered stretches follow at residues 254–290 and 310–595; these read HTDPSEPLKWELKQKPGLSPPRGGFDPDDPNQQIVAE and KSMS…RRRN. The segment covering 256–267 has biased composition (basic and acidic residues); it reads DPSEPLKWELKQ. Basic residues-rich tracts occupy residues 316–331 and 351–364; these read KKRKSKKNKRHKKHSS and RGSKKRKKLKKKSK. Composition is skewed to basic and acidic residues over residues 414–428, 470–539, and 547–565; these read HYYDEKHQKRKEIVD, VSEK…HVYE, and FSDRYRSTKKTESDSESNR. Positions 584–595 are enriched in basic residues; it reads RKHRYSTNRRRN.

This is an uncharacterized protein from Arabidopsis thaliana (Mouse-ear cress).